The following is a 365-amino-acid chain: Casein kinase I homolog hhp1 (365 aa).

The region spanning 11–279 (YRIGRKIGSG…YLRKLFRDLF (269 aa)) is the Protein kinase domain. Residues 17-25 (IGSGSFGDI) and K40 each bind ATP. D130 serves as the catalytic Proton acceptor. Over residues 301 to 311 (DQQHQQQLQQQ) the composition is skewed to low complexity. The interval 301-365 (DQQHQQQLQQ…TGAQYINRPN (65 aa)) is disordered. Positions 343-365 (INTTVPVINDPSATGAQYINRPN) are enriched in polar residues.

Belongs to the protein kinase superfamily. CK1 Ser/Thr protein kinase family. Casein kinase I subfamily.

It localises to the nucleus. It carries out the reaction L-seryl-[protein] + ATP = O-phospho-L-seryl-[protein] + ADP + H(+). The enzyme catalyses L-threonyl-[protein] + ATP = O-phospho-L-threonyl-[protein] + ADP + H(+). In terms of biological role, involved in DNA repair. Has a probable role in repairing alkylated DNA and may regulate the activity of protein(s) involved in double strand break repair caused by gamma rays. This is Casein kinase I homolog hhp1 (hhp1) from Schizosaccharomyces pombe (strain 972 / ATCC 24843) (Fission yeast).